Reading from the N-terminus, the 219-residue chain is Histone H1.4 (219 aa).

Low complexity predominate over residues 1–15 (MSETAPAAPAAPAPA). A disordered region spans residues 1–41 (MSETAPAAPAAPAPAEKTPVKKKARKSAGAAKRKASGPPVS). An N-acetylserine modification is found at Ser-2. Ser-2 is subject to Phosphoserine. N6-acetyllysine is present on Lys-17. At Thr-18 the chain carries Phosphothreonine. A compositionally biased stretch (basic residues) spans 20-35 (VKKKARKSAGAAKRKA). Lys-26 bears the N6-acetyllysine; alternate mark. Lys-26 carries the N6-methyllysine; alternate modification. Lys-34 is subject to N6-(beta-hydroxybutyryl)lysine; alternate. N6-succinyllysine; alternate is present on Lys-34. Phosphoserine is present on Ser-36. One can recognise an H15 domain in the interval 36–109 (SGPPVSELIT…GASGSFKLNK (74 aa)). Residue Lys-52 is modified to N6-(beta-hydroxybutyryl)lysine. A Citrulline modification is found at Arg-54. 4 positions are modified to N6-(beta-hydroxybutyryl)lysine: Lys-64, Lys-85, Lys-90, and Lys-106. The tract at residues 91-219 (GTLVQTKGTG…KPKKAPAKKK (129 aa)) is disordered. Positions 119–140 (KPKKAGAAKPKKPAGAAKKPKK) are enriched in basic residues. Position 146 is a phosphothreonine (Thr-146). Composition is skewed to basic residues over residues 149–160 (KGAKKTPKKAKK) and 168–185 (KKAK…KKAP). Position 187 is a phosphoserine (Ser-187). Residues 192-219 (KAVKPKAAKPKAAKPKTAKPKKAPAKKK) show a composition bias toward basic residues.

Belongs to the histone H1/H5 family. Post-translationally, H1 histones are progressively phosphorylated during the cell cycle, becoming maximally phosphorylated during late G2 phase and M phase, and being dephosphorylated sharply thereafter. Acetylated at Lys-26. Deacetylated at Lys-26 by SIRT1. In terms of processing, citrullination at Arg-54 (H1R54ci) by PADI4 takes place within the DNA-binding site of H1 and results in its displacement from chromatin and global chromatin decondensation, thereby promoting pluripotency and stem cell maintenance.

It is found in the nucleus. Its subcellular location is the chromosome. Functionally, histone H1 protein binds to linker DNA between nucleosomes forming the macromolecular structure known as the chromatin fiber. Histones H1 are necessary for the condensation of nucleosome chains into higher-order structured fibers. Also acts as a regulator of individual gene transcription through chromatin remodeling, nucleosome spacing and DNA methylation. This chain is Histone H1.4, found in Oryctolagus cuniculus (Rabbit).